The following is a 692-amino-acid chain: Hexamerin-1.1 (692 aa).

Residues 1 to 18 form the signal peptide; it reads MKLLILAVAISLAVLASG. N203 carries an N-linked (GlcNAc...) asparagine glycan.

Belongs to the hemocyanin family. In terms of assembly, homohexamer. In terms of tissue distribution, larval fat body.

Its subcellular location is the secreted. It localises to the extracellular space. Its function is as follows. Larval storage protein (LSP) which may serve as a store of amino acids for synthesis of adult proteins. This is Hexamerin-1.1 (HexA) from Anopheles gambiae (African malaria mosquito).